Consider the following 678-residue polypeptide: uncharacterized protein (678 aa).

2 helical membrane passes run 14–34 and 180–200; these read LMFA…WTGL and GAVI…IGGF.

This sequence belongs to the mycobacterial PPE family.

The protein resides in the cell membrane. This is an uncharacterized protein from Mycobacterium tuberculosis (strain ATCC 25618 / H37Rv).